The chain runs to 363 residues: MLYKSGEKRKGLLMSGCLYRIYGVGFSLGFFIALQIICGVCLAWLFFSCFICSNWYFVLFLWDFDLGFVIRSVHICFTSLLYLLLYIHIFKSITLIILFDTHILVWFIGFILFVFIIIIAFIGYVLPCTMMSYWGLTVFSNIIATVPILGIWLCYWIWGSEFINDFTLLKLHVLHVLLPFILLIILILHLFCLHYFMSSDAFCDRFAFYCERLSFCMWFYLRDMFLAFSILLCMMYVIFINWYFVFHEESWVIVDTLKTSDKILPEWFFLYLFGFLKAIPDKFMGLFLMVILLFSLFLFILNCILWFVYCRSSLLWLTYSLILFYSIWMSGFLALYVVLAYPIWMELQYWVLLLFLLIVCRLD.

Helical transmembrane passes span 24–44 (VGFSLGFFIALQIICGVCLAW), 68–90 (FVIRSVHICFTSLLYLLLYIHIF), 105–125 (VWFIGFILFVFIIIIAFIGYV), and 171–191 (LHVLHVLLPFILLIILILHLF). Heme b contacts are provided by His74 and His88. The heme b site is built by His175 and His189. His194 contacts a ubiquinone. 4 helical membrane passes run 219 to 239 (FYLRDMFLAFSILLCMMYVIF), 287 to 307 (FLMVILLFSLFLFILNCILWF), 321 to 341 (LILFYSIWMSGFLALYVVLAY), and 342 to 362 (PIWMELQYWVLLLFLLIVCRL).

This sequence belongs to the cytochrome b family. As to quaternary structure, the main subunits of complex b-c1 are: cytochrome b, cytochrome c1 and the Rieske protein. Requires heme b as cofactor.

The protein localises to the mitochondrion inner membrane. Functionally, component of the ubiquinol-cytochrome c reductase complex (complex III or cytochrome b-c1 complex) that is part of the mitochondrial respiratory chain. The b-c1 complex mediates electron transfer from ubiquinol to cytochrome c. Contributes to the generation of a proton gradient across the mitochondrial membrane that is then used for ATP synthesis. The sequence is that of Cytochrome b (MT-CYB) from Trypanosoma brucei brucei.